Here is a 382-residue protein sequence, read N- to C-terminus: MTEFWLISAPGEKTCQQTWEKLHAATTKNNNLAVSSKFNIPDLKVGTLDVLVGLSDELAKLDAFVEGVVKKVAQYMADVLEDSKDKVQENLLASGVDLVTYITRFQWDMAKYPIKQSLKNISEIIAKGVTQIDNDLKSRASAYNNLKGNLQNLERKNAGSLLTRSLAEIVKKDDFVLDSEYLVTLLVVVPKLNHNDWIKQYETLAEMVVPRSSNVLSEDQDSYLCNVTLFKKAVDDFRHKARENKFIVRDFQYNEEEMRADKEEMNRLSTDKKKQFGPLVRWLKVNFSEAFIAWIHIKALRVFVESVLRYGLPVNFQAMLLQPNKKSVKKLREVLHELYKHLDSSAAAIIDAPMDIPGLNLSQQEYYPYVYYKIDCNLLEFK.

The residue at position 2 (T2) is an N-acetylthreonine.

It belongs to the V-ATPase C subunit family. V-ATPase is a heteromultimeric enzyme made up of two complexes: the ATP-hydrolytic V1 complex and the proton translocation V0 complex. The V1 complex consists of three catalytic AB heterodimers that form a heterohexamer, three peripheral stalks each consisting of EG heterodimers, one central rotor including subunits D and F, and the regulatory subunits C and H. The proton translocation complex V0 consists of the proton transport subunit a, a ring of proteolipid subunits c9c'', rotary subunit d, subunits e and f, and the accessory subunits ATP6AP1/Ac45 and ATP6AP2/PRR. Expressed in brain (at protein level).

It is found in the cytoplasmic vesicle. The protein localises to the secretory vesicle. It localises to the synaptic vesicle membrane. The protein resides in the clathrin-coated vesicle membrane. Its function is as follows. Subunit of the V1 complex of vacuolar(H+)-ATPase (V-ATPase), a multisubunit enzyme composed of a peripheral complex (V1) that hydrolyzes ATP and a membrane integral complex (V0) that translocates protons. V-ATPase is responsible for acidifying and maintaining the pH of intracellular compartments and in some cell types, is targeted to the plasma membrane, where it is responsible for acidifying the extracellular environment. Subunit C is necessary for the assembly of the catalytic sector of the enzyme and is likely to have a specific function in its catalytic activity. In Rattus norvegicus (Rat), this protein is V-type proton ATPase subunit C 1 (Atp6v1c1).